Reading from the N-terminus, the 1186-residue chain is Chromosome partition protein Smc (1186 aa).

Position 32–39 (32–39 (PNGSGKSN)) interacts with ATP. 2 coiled-coil regions span residues 167–206 (VLKY…EPLK) and 259–481 (SSAI…QAYQ). Positions 519-637 (GIRGAVLELI…EDLKGANELA (119 aa)) constitute an SMC hinge domain. Coiled-coil stretches lie at residues 672-864 (LLGR…MSSS), 893-943 (RDQR…NLLQ), and 990-1029 (SIDE…DEEM).

Belongs to the SMC family. Homodimer.

The protein localises to the cytoplasm. Functionally, required for chromosome condensation and partitioning. This chain is Chromosome partition protein Smc, found in Bacillus subtilis (strain 168).